The following is a 582-amino-acid chain: Hydrazine dehydrogenase (582 aa).

The first 32 residues, 1–32 (MRKFLKVTLASALIGCGVIGTVSSLMVKEAKA), serve as a signal peptide directing secretion. Residues C121, C124, H125, H141, C151, C154, H155, H159, C170, C175, H176, H191, C216, C219, H220, C227, C230, H231, H234, C247, C250, H251, H267, C297, C300, H301, H306, C342, C345, H346, H454, and Y462 each contribute to the heme c site. The disordered stretch occupies residues 561–582 (GSHSAHHHESGHDPAARSMKEH). The span at 567-582 (HHESGHDPAARSMKEH) shows a compositional bias: basic and acidic residues.

As to quaternary structure, homotrimer; subunits are linked by two covalent bonds between Tyr-462 of one subunit and heme P460 of an adjacent subunit. May form 24-mer of an octamer of trimers. It depends on heme c as a cofactor.

It localises to the anammoxosome. The catalysed reaction is hydrazine + 4 Fe(III)-[cytochrome c] = N2 + 4 Fe(II)-[cytochrome c] + 4 H(+). Its pathway is nitrogen metabolism. Is strongly and competitively inhibited by NO and hydroxylamine. Catalyzes the four-electron oxidation of hydrazine to N2. The electrons derived from hydrazine oxidation may be transferred to the quinone pool and exploited to promote the generation of proton-motive force (pmf) across the anammoxosome membrane. Is involved in anaerobic ammonium oxidation (anammox), a biological process in which nitrite is used as the electron acceptor in the conversion of ammonium to dinitrogen gas (N2) and water; this bacterial process has a major role in the Earth's nitrogen cycle and has been estimated to synthesize up to 50% of the dinitrogen gas emitted into our atmosphere from the oceans. Cannot oxidize hydroxylamine to NO. The protein is Hydrazine dehydrogenase of Kuenenia stuttgartiensis.